We begin with the raw amino-acid sequence, 513 residues long: Activin receptor type-2A (513 aa).

Residues 1–19 form the signal peptide; it reads MGAAAKLAFAVFLISCSSG. Topologically, residues 20–135 are extracellular; sequence AILGRSETQE…TSNPVTPKPP (116 aa). 5 cysteine pairs are disulfide-bonded: Cys-30-Cys-60, Cys-50-Cys-78, Cys-85-Cys-104, Cys-91-Cys-103, and Cys-105-Cys-110. Residues Asn-43 and Asn-66 are each glycosylated (N-linked (GlcNAc...) asparagine). Residues 136–161 form a helical membrane-spanning segment; sequence YYNILLYSLVPLMLIAGIVICAFWVY. Topologically, residues 162–513 are cytoplasmic; it reads RHHMMAYPPV…VDFPPKESSL (352 aa). One can recognise a Protein kinase domain in the interval 192–485; the sequence is LQLLEVKARG…GERITQMQRL (294 aa). ATP contacts are provided by residues 198–206 and Lys-219; that span reads KARGRFGCV. Asp-322 serves as the catalytic Proton acceptor.

It belongs to the protein kinase superfamily. TKL Ser/Thr protein kinase family. TGFB receptor subfamily. As to quaternary structure, part of a complex consisting of MAGI2/ARIP1, ACVR2A, ACVR1B and SMAD3. Interacts with MAGI2/ARIP1. Interacts with type I receptor ACVR1. Interacts with BMP7. Interacts with TSC22D1/TSC-22. Interacts with activin A/INHBA. It depends on Mg(2+) as a cofactor. Mn(2+) serves as cofactor.

The protein resides in the cell membrane. It catalyses the reaction L-threonyl-[receptor-protein] + ATP = O-phospho-L-threonyl-[receptor-protein] + ADP + H(+). The catalysed reaction is L-seryl-[receptor-protein] + ATP = O-phospho-L-seryl-[receptor-protein] + ADP + H(+). Functionally, on ligand binding, forms a receptor complex consisting of two type II and two type I transmembrane serine/threonine kinases. Type II receptors phosphorylate and activate type I receptors which autophosphorylate, then bind and activate SMAD transcriptional regulators. Receptor for activin A, activin B and inhibin A. Mediates induction of adipogenesis by GDF6. This is Activin receptor type-2A from Rattus norvegicus (Rat).